Consider the following 282-residue polypeptide: Casein kinase II subunit beta-2 (282 aa).

The tract at residues 1–92 is disordered; it reads MYRERGMVGS…ESEVSGSDGE (92 aa). The segment covering 13–28 has biased composition (basic and acidic residues); the sequence is EVVDRKRINEIHDNRP. 2 stretches are compositionally biased toward polar residues: residues 29–47 and 61–71; these read SHSM…STSV and RSGSISKTNIS. The span at 75-92 shows a compositional bias: acidic residues; that stretch reads DISDTDSEESEVSGSDGE.

This sequence belongs to the casein kinase 2 subunit beta family. In terms of assembly, heterotetramer of two catalytic alpha subunits and two regulatory beta subunits. Interacts with CCA1. Phosphorylated by alpha subunit.

The protein localises to the cytoplasm. It is found in the cytosol. Its subcellular location is the nucleus. Functionally, plays a complex role in regulating the basal catalytic activity of the alpha subunit. The tetrameric holoenzyme CK2, composed of two alpha and two beta subunits, phosphorylates the transcription factor PIF1 after an exposure to light, resulting in a proteasome-dependent degradation of PIF1 and promotion of photomorphogenesis. CK2 phosphorylates translation initiation factors. May participate in the regulation of the initiation of translation. The protein is Casein kinase II subunit beta-2 (CKB2) of Arabidopsis thaliana (Mouse-ear cress).